The primary structure comprises 215 residues: Protein FAM27D1 (215 aa).

Residues glutamine 74–arginine 172 form a disordered region. The span at threonine 87 to arginine 108 shows a compositional bias: basic and acidic residues. The segment covering histidine 109–threonine 122 has biased composition (basic residues). Composition is skewed to basic and acidic residues over residues histidine 123 to threonine 139 and serine 149 to proline 162. The segment covering arginine 163–arginine 172 has biased composition (polar residues).

It belongs to the FAM27 family.

The polypeptide is Protein FAM27D1 (FAM27D1) (Homo sapiens (Human)).